A 286-amino-acid polypeptide reads, in one-letter code: Movement protein (286 aa).

It belongs to the tenuiviruses pc4 protein family. In terms of assembly, interacts with the rice proteins DJA6 and HSP17.9A.

The protein resides in the host cytoplasm. Transports viral genome to neighboring plant cells directly through plasmosdesmata, without any budding. The movement protein allows efficient cell to cell propagation, by bypassing the host cell wall barrier. In Avena sativa (Oat), this protein is Movement protein.